The primary structure comprises 314 residues: Formate-nitrite transporter (314 aa).

At 1–47 the chain is on the cytoplasmic side; that stretch reads MQKSTSKYVIDPISIKTNCSSEESYIRCVEYGKGKAHYRNLILLAKA. Residues 48 to 68 traverse the membrane as a helical segment; it reads ILAGVFVGVCAHASGIAGGLF. Residues 69–77 lie on the Extracellular side of the membrane; the sequence is YYHKLREYV. The chain crosses the membrane as a helical span at residues 78–98; that stretch reads GISMSAFVYGFTFPIAFLCII. Residues 99–128 lie on the Cytoplasmic side of the membrane; sequence CTGSDLFTGNTLAVTTALLQKKLGLLCYMR. A helical transmembrane segment spans residues 129-149; sequence VMCISLVGNYIGAVAFAFFVS. The Extracellular portion of the chain corresponds to 150-185; the sequence is YGSGAFSINTDTSKNHIFQFLNDIAIKKVSHSFIEC. Residues 186–206 traverse the membrane as a helical segment; the sequence is ICLAIGCNIFVCLAVYFVLSI. Residues 207–211 are Cytoplasmic-facing; sequence KDGSG. The helical transmembrane segment at 212–232 threads the bilayer; sequence LVFSVFFAVYAFAIAGYEHII. Topologically, residues 233–260 are extracellular; that stretch reads ANIYTLNLALMISNDISFTQVYFKNLLP. A helical membrane pass occupies residues 261–281; sequence TLIGNYIAGGLVLAFPLFFIY. At 282–314 the chain is on the cytoplasmic side; that stretch reads RSCYYDYDKMNDELNTVVLKTLSLELQNESNHI.

It belongs to the FNT transporter (TC 1.A.16) family. As to quaternary structure, homopentamer.

It localises to the cell membrane. The protein resides in the vacuole membrane. It catalyses the reaction (S)-lactate(in) + H(+)(in) = (S)-lactate(out) + H(+)(out). It carries out the reaction formate(in) + H(+)(in) = formate(out) + H(+)(out). The catalysed reaction is pyruvate(out) + H(+)(out) = pyruvate(in) + H(+)(in). The enzyme catalyses acetate(out) + H(+)(out) = acetate(in) + H(+)(in). With respect to regulation, inhibited by the Malaria Box compound MMV007839 and its derivatives BH296 and BH267.meta. Monocarboxylate-proton symporter that mediates the efflux of the waste product lactate in the intraerythrocytic parasites; active in acidic-to-neutral pH range. Transports L-lactate. The polypeptide is Formate-nitrite transporter (Plasmodium malariae).